The following is a 75-amino-acid chain: UPF0291 protein lmo1304 (75 aa).

Residues D56 to Y75 form a disordered region. The span at H65–Y75 shows a compositional bias: basic residues.

It belongs to the UPF0291 family.

The protein localises to the cytoplasm. This chain is UPF0291 protein lmo1304, found in Listeria monocytogenes serovar 1/2a (strain ATCC BAA-679 / EGD-e).